Reading from the N-terminus, the 133-residue chain is Large-conductance mechanosensitive channel (133 aa).

The next 2 helical transmembrane spans lie at 17-37 and 73-93; these read AFILKGNVVELAVAVIIGGAF and IGSFAGSVIDFLIIAFVLYLA.

This sequence belongs to the MscL family. Homopentamer.

The protein localises to the cell inner membrane. Channel that opens in response to stretch forces in the membrane lipid bilayer. May participate in the regulation of osmotic pressure changes within the cell. The chain is Large-conductance mechanosensitive channel from Synechococcus elongatus (strain ATCC 33912 / PCC 7942 / FACHB-805) (Anacystis nidulans R2).